A 213-amino-acid polypeptide reads, in one-letter code: Charged multivesicular body protein 2b (213 aa).

An N-acetylalanine modification is found at alanine 2. Residues 25–55 are a coiled coil; the sequence is QRAIIRDRAALEKQEKQLELEIKKMAKIGNK. Residues 178–202 form a disordered region; sequence MAKAPSAARSLPSASTSKSTISDEE. Low complexity predominate over residues 179 to 194; that stretch reads AKAPSAARSLPSASTS. The residue at position 199 (serine 199) is a Phosphoserine. The MIT-interacting motif signature appears at 201–211; sequence EEIERQLKALG.

Belongs to the SNF7 family. In terms of assembly, probable core component of the endosomal sorting required for transport complex III (ESCRT-III). ESCRT-III components are thought to multimerize to form a flat lattice on the perimeter membrane of the endosome. Several assembly forms of ESCRT-III may exist that interact and act sequentially. Interacts with CHMP2A. Interacts with VPS4A. Interacts with VPS4B; the interaction is direct.

The protein resides in the cytoplasm. The protein localises to the cytosol. It is found in the late endosome membrane. Probable core component of the endosomal sorting required for transport complex III (ESCRT-III) which is involved in multivesicular bodies (MVBs) formation and sorting of endosomal cargo proteins into MVBs. MVBs contain intraluminal vesicles (ILVs) that are generated by invagination and scission from the limiting membrane of the endosome and mostly are delivered to lysosomes enabling degradation of membrane proteins, such as stimulated growth factor receptors, lysosomal enzymes and lipids. The MVB pathway appears to require the sequential function of ESCRT-O, -I,-II and -III complexes. ESCRT-III proteins mostly dissociate from the invaginating membrane before the ILV is released. The ESCRT machinery also functions in topologically equivalent membrane fission events, such as the terminal stages of cytokinesis and the budding of enveloped viruses (lentiviruses). ESCRT-III proteins are believed to mediate the necessary vesicle extrusion and/or membrane fission activities, possibly in conjunction with the AAA ATPase VPS4. This is Charged multivesicular body protein 2b (CHMP2B) from Bos taurus (Bovine).